A 118-amino-acid polypeptide reads, in one-letter code: Iron-sulfur cluster insertion protein ErpA (118 aa).

Positions 46, 110, and 112 each coordinate iron-sulfur cluster.

This sequence belongs to the HesB/IscA family. Homodimer. Iron-sulfur cluster serves as cofactor.

Functionally, required for insertion of 4Fe-4S clusters for at least IspG. This Psychromonas ingrahamii (strain DSM 17664 / CCUG 51855 / 37) protein is Iron-sulfur cluster insertion protein ErpA.